Reading from the N-terminus, the 721-residue chain is Exocyst complex component 3-like protein 4 (721 aa).

Disordered regions lie at residues 1–52 (MPLP…SLGM) and 94–135 (GLTA…QAES). The segment covering 22–37 (SQTLPVTTWKSNSMKE) has biased composition (polar residues). Ser-515 carries the phosphoserine modification.

This sequence belongs to the SEC6 family.

The chain is Exocyst complex component 3-like protein 4 (Exoc3l4) from Mus musculus (Mouse).